A 313-amino-acid chain; its full sequence is Dihydroorotate dehydrogenase (fumarate) (313 aa).

Residues Ala20 and 44-45 (KS) each bind FMN. Substrate is bound by residues Lys44, 68 to 72 (NSMGL), and Asn128. Residue Asn128 coordinates FMN. The Nucleophile role is filled by Cys131. Asn133 provides a ligand contact to substrate. FMN-binding residues include Lys165 and Val194. Substrate is bound at residue 195–196 (NS). Residues Gly223, Cys249, 249 to 251 (CGG), and 272 to 273 (GT) contribute to the FMN site.

The protein belongs to the dihydroorotate dehydrogenase family. Type 1 subfamily. As to quaternary structure, homodimer. FMN is required as a cofactor.

The protein resides in the cytoplasm. It catalyses the reaction (S)-dihydroorotate + fumarate = orotate + succinate. Its pathway is pyrimidine metabolism; UMP biosynthesis via de novo pathway. Functionally, catalyzes the conversion of dihydroorotate to orotate with fumarate as the electron acceptor. Molecular oxygen can replace fumarate in vitro. This is Dihydroorotate dehydrogenase (fumarate) from Trypanosoma brucei brucei (strain 927/4 GUTat10.1).